A 234-amino-acid polypeptide reads, in one-letter code: Triosephosphate isomerase (234 aa).

Residue 8–10 (NFK) participates in substrate binding. His90 functions as the Electrophile in the catalytic mechanism. Glu159 acts as the Proton acceptor in catalysis. Substrate-binding residues include Gly165 and Ser197.

The protein belongs to the triosephosphate isomerase family. In terms of assembly, homodimer.

Its subcellular location is the cytoplasm. The enzyme catalyses D-glyceraldehyde 3-phosphate = dihydroxyacetone phosphate. It participates in carbohydrate biosynthesis; gluconeogenesis. The protein operates within carbohydrate degradation; glycolysis; D-glyceraldehyde 3-phosphate from glycerone phosphate: step 1/1. In terms of biological role, involved in the gluconeogenesis. Catalyzes stereospecifically the conversion of dihydroxyacetone phosphate (DHAP) to D-glyceraldehyde-3-phosphate (G3P). The protein is Triosephosphate isomerase of Helicobacter acinonychis (strain Sheeba).